A 965-amino-acid chain; its full sequence is Isoleucine--tRNA ligase (965 aa).

Positions 68–78 match the 'HIGH' region motif; that stretch reads PYANGSLHMGH. Glutamate 582 lines the L-isoleucyl-5'-AMP pocket. Residues 623 to 627 carry the 'KMSKS' region motif; that stretch reads KMSKS. Position 626 (lysine 626) interacts with ATP. Zn(2+) is bound by residues cysteine 936, cysteine 939, cysteine 956, and cysteine 959.

Belongs to the class-I aminoacyl-tRNA synthetase family. IleS type 1 subfamily. Monomer. Requires Zn(2+) as cofactor.

The protein localises to the cytoplasm. The enzyme catalyses tRNA(Ile) + L-isoleucine + ATP = L-isoleucyl-tRNA(Ile) + AMP + diphosphate. Its function is as follows. Catalyzes the attachment of isoleucine to tRNA(Ile). As IleRS can inadvertently accommodate and process structurally similar amino acids such as valine, to avoid such errors it has two additional distinct tRNA(Ile)-dependent editing activities. One activity is designated as 'pretransfer' editing and involves the hydrolysis of activated Val-AMP. The other activity is designated 'posttransfer' editing and involves deacylation of mischarged Val-tRNA(Ile). This Prochlorococcus marinus subsp. pastoris (strain CCMP1986 / NIES-2087 / MED4) protein is Isoleucine--tRNA ligase.